The sequence spans 158 residues: Extracellular giant hemoglobin major globin subunit A2 (158 aa).

A signal peptide spans 1-16; the sequence is MKSLIVFACLVAYAAA. The Globin domain maps to 17–158; that stretch reads DCTSLNRLLV…MNQIVSGISG (142 aa). Residues cysteine 18 and cysteine 148 are joined by a disulfide bond. Cysteine 89 lines the hydrogen sulfide pocket. Histidine 110 lines the heme b pocket.

This sequence belongs to the globin family. The 400 kDa hemoglobin consists of a spherical 24-mer arranged as a double layer of dome-shaped dodecamers. Each dodecamer is composed of the 3-fold trimer of the tetramer A1-A2-B1-B2 having one intra-tetramer (A1-B2) disulfide bond and one inter-tetramer (B1-B2) disulfide bond per tetramer.

The protein localises to the secreted. The extracellular giant hemoglobin is able to bind and transport oxygen and hydrosulfide simultaneously and reversibly at two different sites. The protein is Extracellular giant hemoglobin major globin subunit A2 (ghbA2) of Oligobrachia mashikoi (Beard worm).